The chain runs to 485 residues: Alpha-amylase (485 aa).

The first 18 residues, methionine 1–glycine 18, serve as a signal peptide directing secretion. Position 19 is a pyrrolidone carboxylic acid (glutamine 19). The cysteines at positions 46 and 102 are disulfide-linked. Residues asparagine 116, arginine 164, and aspartate 173 each coordinate Ca(2+). A disulfide bridge links cysteine 152 with cysteine 166. Arginine 201 provides a ligand contact to chloride. Aspartate 203 functions as the Nucleophile in the catalytic mechanism. Histidine 207 lines the Ca(2+) pocket. The active-site Proton donor is glutamate 240. Chloride-binding residues include asparagine 303 and arginine 339. Cysteine 439 and cysteine 451 are disulfide-bonded. Residue asparagine 448 is glycosylated (N-linked (GlcNAc...) asparagine).

This sequence belongs to the glycosyl hydrolase 13 family. Monomer. It depends on Ca(2+) as a cofactor. Chloride is required as a cofactor. As to expression, expressed in larval and adult gut.

The protein resides in the secreted. It catalyses the reaction Endohydrolysis of (1-&gt;4)-alpha-D-glucosidic linkages in polysaccharides containing three or more (1-&gt;4)-alpha-linked D-glucose units.. This Phaedon cochleariae (Mustard beetle) protein is Alpha-amylase.